A 2223-amino-acid chain; its full sequence is Protein CHROMATIN REMODELING 4 (2223 aa).

Residues 39-69 (FDSPEYTSSSKPSKQRLKTDSTPERNSSKRK) form a disordered region. The span at 55–69 (LKTDSTPERNSSKRK) shows a compositional bias: basic and acidic residues. The PHD-type zinc finger occupies 75 to 122 (YFECVICDLGGDLLCCDSCPRTYHTACLNPPLKRIPNGKWICPKCSPN). Composition is skewed to basic and acidic residues over residues 173 to 187 (EKGK…KSTG), 207 to 223 (SADD…DDLG), 248 to 285 (ESKL…ETGK), and 294 to 305 (ELNDGESLERCK). Disordered regions lie at residues 173–235 (EKGK…LPSD), 248–381 (ESKL…CLED), and 441–474 (AEDR…GTEG). A compositionally biased stretch (basic residues) spans 306–315 (TDKKRAKKSL). A compositionally biased stretch (basic and acidic residues) spans 353–368 (ETPEKVKKLPKEERRA). Polar residues predominate over residues 372–381 (TNKSSSCLED). Positions 441–466 (AEDRIDSSSETGKSSRDSRLRDKDMD) are enriched in basic and acidic residues. 2 Chromo domains span residues 531–587 (EEIE…YKAK) and 601–663 (KQPQ…ERNS). A Helicase ATP-binding domain is found at 701-878 (RRCWHKSKNV…YNLLNFLQPS (178 aa)). 714 to 721 (DEMGLGKT) contacts ATP. The short motif at 829 to 832 (DEGH) is the DEAH box element. Residues 902–909 (LKKLVAPH) carry the Nuclear localization signal motif. The Helicase C-terminal domain occupies 1008-1167 (LLHSMLKVLH…GSQKEFEDIL (160 aa)). 6 disordered regions span residues 1268–1300 (EETA…DDVV), 1341–1380 (EAYA…LKEK), 1394–1463 (RRNS…ECLP), 1483–1511 (SESS…FNLP), 1760–1779 (LSSL…SSLF), and 2006–2223 (IPPF…LSDD). Basic and acidic residues predominate over residues 1363–1380 (EPELKKEYTPAGRALKEK). The stretch at 1375-1402 (RALKEKFTKLRERQKNLIARRNSVEESL) forms a coiled coil. Polar residues predominate over residues 1403–1414 (PSGNVDQVTEVA). The segment covering 2009 to 2019 (FVIPEPPPPAP) has biased composition (pro residues). The span at 2025–2035 (SLRKKRKRKLH) shows a compositional bias: basic residues. 3 stretches are compositionally biased toward polar residues: residues 2039-2061 (QKTT…GNPQ), 2075-2096 (GETS…TEPL), and 2128-2148 (TGTT…TINQ). Residues 2157 to 2171 (DEKVESERTPLHSDE) show a composition bias toward basic and acidic residues. Residues 2189–2215 (IEAESQNTNAEEEAEAQEEDEESMKMV) are a coiled coil. Residues 2198–2210 (AEEEAEAQEEDEE) show a composition bias toward acidic residues.

This sequence belongs to the SNF2/RAD54 helicase family.

It is found in the nucleus. Chromatin-remodeling protein that binds DNA through histones and regulates gene transcription. May specifically recognize and bind trimethylated 'Lys-27' (H3K27me3) and non-methylated 'Lys-4' of histone H3. Probable chromatin remodeling factor. The protein is Protein CHROMATIN REMODELING 4 of Arabidopsis thaliana (Mouse-ear cress).